Consider the following 959-residue polypeptide: Transcription factor 1 (959 aa).

2 consecutive C2H2-type zinc fingers follow at residues 2–24 (VFCT…ILTH) and 30–52 (FKCF…YTVH). Residues 79–105 (CSNCAKTKTKCDKKFPCSRCASRNLRC) constitute a DNA-binding region (zn(2)-C6 fungal-type). Residues 154–226 (PTGHVEESSK…SFPGFDDYNQ (73 aa)) form a disordered region. Residues 163-178 (KSSSPSGSPTSISHNS) show a composition bias toward low complexity.

Its subcellular location is the nucleus. In terms of biological role, elsinochromes biosynthesis cluster-specific transcription factor that positively regulates the expression of cluster genes including RDT1, PKS1, PRF1 and HP1, and subsequent elsinochromes production. In Elsinoe fawcettii (Citrus scab fungus), this protein is Transcription factor 1.